Consider the following 249-residue polypeptide: 2,3-bisphosphoglycerate-dependent phosphoglycerate mutase (249 aa).

Residues arginine 9–asparagine 16, threonine 22–glycine 23, arginine 61, glutamate 88–tyrosine 91, lysine 99, arginine 115–arginine 116, and glycine 184–asparagine 185 contribute to the substrate site. Histidine 10 (tele-phosphohistidine intermediate) is an active-site residue. The active-site Proton donor/acceptor is glutamate 88.

Belongs to the phosphoglycerate mutase family. BPG-dependent PGAM subfamily. Homodimer.

It carries out the reaction (2R)-2-phosphoglycerate = (2R)-3-phosphoglycerate. The protein operates within carbohydrate degradation; glycolysis; pyruvate from D-glyceraldehyde 3-phosphate: step 3/5. In terms of biological role, catalyzes the interconversion of 2-phosphoglycerate and 3-phosphoglycerate. The protein is 2,3-bisphosphoglycerate-dependent phosphoglycerate mutase of Xanthomonas oryzae pv. oryzae (strain PXO99A).